The primary structure comprises 271 residues: Ribosomal RNA small subunit methyltransferase A (271 aa).

L20, G45, E66, D90, and N112 together coordinate S-adenosyl-L-methionine.

The protein belongs to the class I-like SAM-binding methyltransferase superfamily. rRNA adenine N(6)-methyltransferase family. RsmA subfamily.

It is found in the cytoplasm. The catalysed reaction is adenosine(1518)/adenosine(1519) in 16S rRNA + 4 S-adenosyl-L-methionine = N(6)-dimethyladenosine(1518)/N(6)-dimethyladenosine(1519) in 16S rRNA + 4 S-adenosyl-L-homocysteine + 4 H(+). Specifically dimethylates two adjacent adenosines (A1518 and A1519) in the loop of a conserved hairpin near the 3'-end of 16S rRNA in the 30S particle. May play a critical role in biogenesis of 30S subunits. The sequence is that of Ribosomal RNA small subunit methyltransferase A from Blochmanniella floridana.